Consider the following 636-residue polypeptide: MSHASKNYNAQLTAAAASTALHGTKKIYNSNENDRAVNSFLGNRTSYGEAVNGSPQYDYMRSRMSTLGSANQPMAPPSLRNRSSVYLPTPAGPPQIPVNTGKRYTLTSSSANYMTKSERQMRPPKSYDFPPSQQVRPSTSRSPSYASYNSEEVNFQSYQDPRLLPRTSQMYMPDNNYSPAVKSPAAQRRSSSYMVPANSRGSPANYNTPYYPTAIPPPIEEYSPSVSLPTSPVAEESYNNVQRSSTVRNNTTQKSVLKKPSRKMSPAYTSSYRQNSPSSQVPPVSKKHVIIYENKEGSSSSESVYEDVFEDFDPSGSNQASLRSTSTIHYTPSSKRISVIPPNTSNIGSRVVSRSGQNNNQPAQPGQYNQQSQPVQSYQSGQSTQHFQPVQPIQPVQSTQYYQPSSPVQPVQNGVPAPPMQPVQSTQYYQPSSPVQPVQNVKPAQPAQPSLEDAAKRRVEEMLRQMDITPTASSTTANNAYASAEPHPSAFPDDMNSVFSDSSFERERDSGRGRSTNLFSKFKSGRSRSKASGEAPYSYPAPPVPSVNNAGARLTLRDSGAAPEATYSLRQPSNHAYSEGRSYTFTGGQPPSVPTMPYGSRFANDSDSMMGSTADFSSKKKGGKFKAFKKFFKMRF.

Residues 1–297 (MSHASKNYNA…HVIIYENKEG (297 aa)) are required for targeting the protein to eisosomes. Disordered regions lie at residues 111–205 (ANYM…SPAN), 222–284 (YSPS…VPPV), 313–387 (DPSG…TQHF), 400–451 (QYYQ…QPSL), 467–550 (DITP…VNNA), and 572–604 (PSNHAYSEGRSYTFTGGQPPSVPTMPYGSRFAN). Polar residues-rich tracts occupy residues 131–159 (PSQQVRPSTSRSPSYASYNSEEVNFQSYQ), 166–178 (RTSQMYMPDNNYS), 188–204 (RRSSSYMVPANSRGSPA), 237–255 (SYNNVQRSSTVRNNTTQKS), and 315–354 (SGSNQASLRSTSTIHYTPSSKRISVIPPNTSNIGSRVVSR). Positions 355–383 (SGQNNNQPAQPGQYNQQSQPVQSYQSGQS) are enriched in low complexity. Composition is skewed to polar residues over residues 400 to 412 (QYYQPSSPVQPVQ) and 422 to 439 (PVQSTQYYQPSSPVQPVQ). Residues 471–484 (TASSTTANNAYASA) are compositionally biased toward low complexity. The segment covering 503–512 (SFERERDSGR) has biased composition (basic and acidic residues). The segment covering 572–589 (PSNHAYSEGRSYTFTGGQ) has biased composition (polar residues).

In terms of assembly, component of eisosomes, large cytoplasmic protein assemblies that localize to specialized domains termed MCCs on the plasma membrane.

Its subcellular location is the cytoplasm. It localises to the cell cortex. The protein localises to the cell tip. In terms of biological role, important for the biogenesis of filamentous eisosomes, large cytoplasmic protein assemblies that localize to specialized domains on the plasma membrane to cluster specific proteins at sites of membrane invaginations. This Schizosaccharomyces pombe (strain 972 / ATCC 24843) (Fission yeast) protein is Eisosome protein sle1 (sle1).